The following is a 209-amino-acid chain: Lipopolysaccharide export system protein LptC (209 aa).

Residues 7-26 form a helical membrane-spanning segment; it reads NIRWNVILGVIALCALAWFY.

Belongs to the LptC family. Component of the lipopolysaccharide transport and assembly complex. Interacts with LptA and the LptBFG transporter complex.

It is found in the cell inner membrane. Its function is as follows. Involved in the assembly of lipopolysaccharide (LPS). Required for the translocation of LPS from the inner membrane to the outer membrane. Facilitates the transfer of LPS from the inner membrane to the periplasmic protein LptA. Could be a docking site for LptA. This is Lipopolysaccharide export system protein LptC from Haemophilus influenzae (strain ATCC 51907 / DSM 11121 / KW20 / Rd).